Reading from the N-terminus, the 112-residue chain is Serum amyloid A protein (112 aa).

Residue glutamine 1 is modified to Pyrrolidone carboxylic acid. Residues 75–86 show a composition bias toward basic and acidic residues; that stretch reads MTRDQVREDTKA. Positions 75–112 are disordered; sequence MTRDQVREDTKADQFANEWGRSGKDPNHFRPPGLPDKY.

Belongs to the SAA family. Expressed by the liver; secreted in plasma.

Its subcellular location is the secreted. Major acute phase reactant. Apolipoprotein of the HDL complex. The sequence is that of Serum amyloid A protein (SAA1) from Ovis aries (Sheep).